Reading from the N-terminus, the 664-residue chain is E3 ubiquitin-protein ligase RNF139 (664 aa).

Alanine 2 bears the N-acetylalanine mark. A run of 12 helical transmembrane segments spans residues 51-71, 85-105, 125-145, 154-174, 178-198, 293-313, 323-343, 356-376, 390-410, 420-440, 469-489, and 495-512; these read IVLQ…VLIL, AFLL…HIDF, SLWM…VTLL, LIIL…PLHI, LLFT…AVKL, GMSA…LAFI, LGFV…LSGL, MCLL…PVLM, FPVL…SYVL, LFAV…SLTV, SIIE…TMMF, and IRAF…YLQA. The RING-type; atypical zinc-finger motif lies at 547–586; sequence CAICYHEFTTSARITPCNHYFHALCLRKWLYIQDTCPMCH. The tract at residues 601–664 is disordered; it reads VSNNNGFIPP…AAEEFNDDTD (64 aa). Over residues 616–628 the composition is skewed to basic and acidic residues; sequence EAVREAAAESDRE. Over residues 629–639 the composition is skewed to acidic residues; sequence LNEDDSTDCDD. At serine 634 the chain carries Phosphoserine. Residues threonine 635 and threonine 663 each carry the phosphothreonine modification.

Interacts with MHC class I and HM13. Interacts with VHL. Component of SCAP-SREBP complex composed of SREBF2, SCAP and RNF139; the complex hampers the interaction between SCAP and SEC24B, thereby reducing SREBF2 proteolytic processing. Interacts with SREBF2 (via C-terminal domain). Interacts with SCAP; the interaction inhibits the interaction of SCAP with SEC24B and hampering the ER to Golgi transport of the SCAP-SREBP complex. Interacts with SEC24B. Interacts with INSIG1 and INSIG2. Interacts with EIF3F and EIF3H; the interaction leads to protein translation inhibitions in a ubiquitination-dependent manner. Interacts with XBP1 isoform 1; the interaction induces ubiquitination and degradation of XBP1 isoform 1. Interacts with AUP1, AMFR and UBE2G2; interaction with AUP1 facilitates interaction of RNF139 with ubiquitin-conjugating enzyme UBE2G2 and ubiquitin ligase AMFR/gp78, leading to sterol-induced ubiquitination of HMGCR and its subsequent proteasomal degradation. Post-translationally, autoubiquitinated. Ubiquitination is induced by sterol and leads to ist degradation via the ubiquitin-proteasome pathway. In terms of tissue distribution, highly expressed in testis, placenta and adrenal gland. Moderate expression in heart, brain, liver, skeletal muscle and pancreas, and low expression in lung and kidney.

It is found in the endoplasmic reticulum membrane. It carries out the reaction S-ubiquitinyl-[E2 ubiquitin-conjugating enzyme]-L-cysteine + [acceptor protein]-L-lysine = [E2 ubiquitin-conjugating enzyme]-L-cysteine + N(6)-ubiquitinyl-[acceptor protein]-L-lysine.. It functions in the pathway protein modification; protein ubiquitination. E3-ubiquitin ligase; acts as a negative regulator of cell proliferation through mechanisms involving G2/M arrest and cell death. Required for MHC class I ubiquitination in cells expressing the cytomegalovirus protein US2 before dislocation from the endoplasmic reticulum (ER). Affects SREBP processing by hindering the SREBP-SCAP complex translocation from the ER to the Golgi, thereby reducing SREBF2 target gene expression. Involved in the sterol-accelerated degradation of HMGCR. This is achieved through binding of RNF139 to INSIG1 and/or INSIG2 at the ER membrane. In addition, interaction of RNF139 with AUP1 facilitates interaction of RNF139 with ubiquitin-conjugating enzyme UBE2G2 and ubiquitin ligase AMFR, leading to ubiquitination of HMGCR. The ubiquitinated HMGCR is then released from the ER into the cytosol for subsequent destruction. Required for INSIG1 ubiquitination. May be required for EIF3 complex ubiquitination. The protein is E3 ubiquitin-protein ligase RNF139 of Homo sapiens (Human).